The sequence spans 296 residues: Thioredoxin-related transmembrane protein 2 (296 aa).

The signal sequence occupies residues 1–48; the sequence is MAVLAPLIALVYSVPRLSRWLAQPYYLLSALLSAAFLLVRKLPPLCHG. Over 49–102 the chain is Extracellular; that stretch reads LPTQREDGNPCDFDWREVEILMFLSAIVMMKNRRSITVEQHIGNIFMFSKVANA. A helical transmembrane segment spans residues 103-125; that stretch reads ILFFRLDIRMGLLYITLCIVFLM. One can recognise a Thioredoxin domain in the interval 114–270; it reads LLYITLCIVF…YQRAKKPSKA (157 aa). Over 126–296 the chain is Cytoplasmic; that stretch reads TCEPPLYMGP…VSDGENKKDK (171 aa). Residues Ser211, Ser243, and Ser288 each carry the phosphoserine modification. The disordered stretch occupies residues 266–296; the sequence is KPSKAGDSIPEEQPVASAPTTVSDGENKKDK. The short motif at 293-296 is the Di-lysine motif element; that stretch reads KKDK.

As to quaternary structure, monomer. Homodimer; disulfide-linked. Occurs in both reduced and oxidized monomeric form. Oxidative conditions increase homodimerization. Interacts with CANX. Interacts with ATP2A2.

The protein localises to the endoplasmic reticulum membrane. Its subcellular location is the mitochondrion membrane. Functionally, endoplasmic reticulum and mitochondria-associated protein that probably functions as a regulator of cellular redox state and thereby regulates protein post-translational modification, protein folding and mitochondrial activity. Indirectly regulates neuronal proliferation, migration, and organization in the developing brain. This is Thioredoxin-related transmembrane protein 2 (TMX2) from Pongo abelii (Sumatran orangutan).